Here is a 200-residue protein sequence, read N- to C-terminus: BREX protein BrxA (200 aa).

Belongs to the BrxA family.

In terms of biological role, BREX systems (bacteriophage exclusion) provide immunity against bacteriophage. Part of a type 1 BREX system. This system allows phage adsorption but prevents phage DNA replication, without degradation of the phage DNA. Methylation of bacterial DNA by PglX probably guides self/non-self discrimination. When the brxA-brxB-brxC-pglX and pglZ-brxL operons are transformed into a susceptible B.subtilis strain (BEST7003) they confer resistance to bacteriophages SPbeta, SP16, Zeta, phi3T and SP02 and partial protection to phages SP01 and SP82G (these include lytic and temperate phage). They do not protect against phages phi105, rho10 or rho14. Additionally confers a very slight reduction in efficiency of plasmid transformation. This is BREX protein BrxA from Bacillus cereus (strain H3081.97).